Consider the following 145-residue polypeptide: Aminoglycoside N(6')-acetyltransferase type 1 (145 aa).

The region spanning 1–145 (MNIKPASEAS…KVVYFSKKID (145 aa)) is the N-acetyltransferase domain. Substrate contacts are provided by W22, Y65, and E78. Acetyl-CoA is bound at residue 80–82 (IYV). Residue D114 coordinates substrate. Residue N119 participates in acetyl-CoA binding. Residue E135 participates in substrate binding.

As to quaternary structure, homodimer.

The catalysed reaction is kanamycin B + acetyl-CoA = N(6')-acetylkanamycin B + CoA + H(+). In terms of biological role, catalyzes the transfer of an acetyl group from acetyl-CoA to the 6'-amino group of aminoglycoside molecules conferring resistance to antibiotics containing the purpurosamine ring including amikacin, kanamycin, tobramycin and netilmicin. This is Aminoglycoside N(6')-acetyltransferase type 1 from Acinetobacter haemolyticus.